Reading from the N-terminus, the 122-residue chain is Succinate dehydrogenase assembly factor 2, mitochondrial (122 aa).

This sequence belongs to the SDHAF2 family. As to quaternary structure, interacts with the flavoprotein subunit within the SDH catalytic dimer.

The protein resides in the mitochondrion matrix. Plays an essential role in the assembly of succinate dehydrogenase (SDH), an enzyme complex (also referred to as respiratory complex II) that is a component of both the tricarboxylic acid (TCA) cycle and the mitochondrial electron transport chain, and which couples the oxidation of succinate to fumarate with the reduction of ubiquinone (coenzyme Q) to ubiquinol. Required for flavinylation (covalent attachment of FAD) of the flavoprotein subunit of the SDH catalytic dimer. This Caenorhabditis briggsae protein is Succinate dehydrogenase assembly factor 2, mitochondrial.